A 447-amino-acid chain; its full sequence is Neuronal acetylcholine receptor subunit alpha-10 (447 aa).

Positions M1–G24 are cleaved as a signal peptide. The Extracellular portion of the chain corresponds to A25 to A237. Residues N40 and N56 are each glycosylated (N-linked (GlcNAc...) asparagine). Cystine bridges form between C154–C168 and C218–C219. 3 consecutive transmembrane segments (helical) span residues A238–F258, V268–S288, and Y302–L322. Topologically, residues H323–R425 are cytoplasmic. A helical membrane pass occupies residues F426–A446.

This sequence belongs to the ligand-gated ion channel (TC 1.A.9) family. Acetylcholine receptor (TC 1.A.9.1) subfamily. Alpha-10/CHRNA10 sub-subfamily. Forms homo- or heterooligomeric channels in conjunction with CHRNA10. The native outer hair cell receptor may be composed of CHRNA9:CHRNA10 heterooligomers. Found in the stoichiometric form (CHRNA9)2:(CHRNA10)3. As to expression, expressed in the outer hair cells of the cochlea and the neurons of dorsal root ganglia.

The protein resides in the synaptic cell membrane. It is found in the cell membrane. The enzyme catalyses Ca(2+)(in) = Ca(2+)(out). It catalyses the reaction Mg(2+)(in) = Mg(2+)(out). The catalysed reaction is K(+)(in) = K(+)(out). It carries out the reaction Na(+)(in) = Na(+)(out). With respect to regulation, activated by a myriad of ligands such as acetylcholine. AChR activity is inhibited by the antagonist alpha-conotoxins RgIA and GeXXA, small disulfide-constrained peptides from cone snails. Its function is as follows. Component of neuronal acetylcholine receptors (nAChRs) that function as pentameric, ligand-gated cation channels with high calcium permeability among other activities. nAChRs are excitatory neurotrasnmitter receptors formed by a collection of nAChR subunits known to mediate synaptic transmission in the nervous system and the neuromuscular junction. Each nAchR subunit confers differential attributes to channel properties, including activation, deactivation and desensitization kinetics, pH sensitivity, cation permeability, and binding to allosteric modulators. Forms heteropentamers with CHRNA9. Expressed in the inner ear, in sympathetic neurons and in other non-neuronal cells, such as skin keratinocytes and lymphocytes. nAChR formed by CHRNA9:CHRNA10 mediate central nervous system control of auditory and vestibular sensory processing. The channel is permeable to a range of divalent cations including calcium, the influx of which may activate a potassium current which hyperpolarizes the cell membrane. In the ear, mediates synaptic transmission between efferent olivocochlear fibers and hair cells of the cochlea, this may lead to a reduction in basilar membrane motion, altering the activity of auditory nerve fibers and reducing the range of dynamic hearing. This may protect against acoustic trauma. May also regulate keratinocyte adhesion. This chain is Neuronal acetylcholine receptor subunit alpha-10 (Chrna10), found in Rattus norvegicus (Rat).